A 272-amino-acid polypeptide reads, in one-letter code: Formamidopyrimidine-DNA glycosylase (272 aa).

Residue P2 is the Schiff-base intermediate with DNA of the active site. E3 serves as the catalytic Proton donor. Catalysis depends on K58, which acts as the Proton donor; for beta-elimination activity. DNA is bound by residues H92, R111, and R153. The FPG-type zinc-finger motif lies at 238-272 (NVYGRGGEPCPVCAKPLTEKPLSQRTTVYCTHCQN). The active-site Proton donor; for delta-elimination activity is R262.

The protein belongs to the FPG family. In terms of assembly, monomer. The cofactor is Zn(2+).

The catalysed reaction is Hydrolysis of DNA containing ring-opened 7-methylguanine residues, releasing 2,6-diamino-4-hydroxy-5-(N-methyl)formamidopyrimidine.. It carries out the reaction 2'-deoxyribonucleotide-(2'-deoxyribose 5'-phosphate)-2'-deoxyribonucleotide-DNA = a 3'-end 2'-deoxyribonucleotide-(2,3-dehydro-2,3-deoxyribose 5'-phosphate)-DNA + a 5'-end 5'-phospho-2'-deoxyribonucleoside-DNA + H(+). Its function is as follows. Involved in base excision repair of DNA damaged by oxidation or by mutagenic agents. Acts as a DNA glycosylase that recognizes and removes damaged bases. Has a preference for oxidized purines, such as 7,8-dihydro-8-oxoguanine (8-oxoG). Has AP (apurinic/apyrimidinic) lyase activity and introduces nicks in the DNA strand. Cleaves the DNA backbone by beta-delta elimination to generate a single-strand break at the site of the removed base with both 3'- and 5'-phosphates. The chain is Formamidopyrimidine-DNA glycosylase from Teredinibacter turnerae (strain ATCC 39867 / T7901).